A 564-amino-acid chain; its full sequence is MFS-type transporter grgE (564 aa).

The segment covering 1–10 (MAENQVDPKR) has biased composition (basic and acidic residues). The disordered stretch occupies residues 1–52 (MAENQVDPKRNLPLYGAADESTSATDKEDEVENVRQNGSAPPIEEARESNEA). An N-linked (GlcNAc...) asparagine glycan is attached at Asn-37. The next 7 membrane-spanning stretches (helical) occupy residues 60 to 80 (HGLSLFFIVLAIMLATFIISL), 101 to 118 (KVSWYGSAYFMTFGGFQT), 131 to 151 (TTFLVSLFIFEIGSLICGVAP), 161 to 181 (AIAGLGGAGMATGGFTIIAFS), 192 to 212 (GLVGSAYGLSAVAGPLIGGAF), 220 to 240 (WCFYINLPVGGLAAVIILIFF), and 262 to 282 (LVGVSLLMCLIICFILALQYG). An N-linked (GlcNAc...) asparagine glycan is attached at Asn-289. 7 helical membrane passes run 293-313 (VIGLLVGFVAILVALIIWEYY), 329-349 (ALWAPSTYMFFFAGSYFILLY), 368-388 (VRNLPMVVTFSIAAILAGAFV), 392-412 (GIATPVMLVGAAIATIGTGLI), 425-445 (IGYQILAAFGFVIPWLIPMNI), 462-482 (IFLAQTLGGAFSVSAAQSAFV), and 531-551 (TFAISVGMVGFACLMGLFTPW).

It belongs to the major facilitator superfamily.

It is found in the membrane. In terms of biological role, MFS-type transporter; part of the gene cluster that mediates the biosynthesis of gregatin A, a fungal polyketide featuring an alkylated furanone core. The chain is MFS-type transporter grgE from Penicillium sp.